A 776-amino-acid polypeptide reads, in one-letter code: Reticulon-1 (776 aa).

Disordered regions lie at residues 1-101, 137-168, 205-245, and 285-580; these read MAAP…KDGE, SESP…DSGI, VKHQ…PAPV, and LTEI…APPP. Ser-327 is modified (phosphoserine). Low complexity predominate over residues 328-341; that stretch reads PGSITPPSSGTEPS. 3 positions are modified to phosphoserine: Ser-350, Ser-352, and Ser-487. Positions 497–511 are enriched in basic and acidic residues; sequence AIREETGVRAEERAP. One can recognise a Reticulon domain in the interval 589–776; the sequence is AIDLLYWRDI…KIPGAKRHAE (188 aa). 2 consecutive transmembrane segments (helical) span residues 603–623 and 705–725; these read IVFG…VVSV and FAVL…LTLL.

Interacts with NDRG1. Interacts with BACE1. In terms of assembly, interacts with TMEM33. As to quaternary structure, interacts with UGCG; regulates the ceramide glucosyltransferase activity of UGCG. In terms of processing, isoforms RTN1-A and RTN1-B are phosphorylated. Expressed in neural and neuroendocrine tissues and cell cultures derived therefrom. Expression of isoform RTN1-C is strongly correlated with neuronal differentiation.

It localises to the endoplasmic reticulum membrane. The protein localises to the golgi apparatus membrane. Its function is as follows. Inhibits amyloid precursor protein processing, probably by blocking BACE1 activity. This is Reticulon-1 (RTN1) from Homo sapiens (Human).